The sequence spans 1055 residues: SMC5-SMC6 complex localization factor protein 1 (1055 aa).

BRCT domains are found at residues 2–80 and 121–199; these read EDDA…AQSG and PGAF…LLEK. The interval 312 to 332 is disordered; the sequence is KKRKKEKERDSRKDIEHDRST. A compositionally biased stretch (basic and acidic residues) spans 318 to 332; it reads KERDSRKDIEHDRST. Residues 407 to 1055 are NSE5-like domain; mediates interaction with SLF2; sequence PRGILNLIES…VMCRSVTEIS (649 aa). ANK repeat units lie at residues 804 to 834, 838 to 867, and 872 to 901; these read KGETALHRACINNQVDRLILLLSMPGIDINV, AGWTPLHEACNYGNTVCVQEILQRCPEVDL, and DGVTPLHDALSNGHVEIGKLLLQHGGPVLL. Lys-929 is covalently cross-linked (Glycyl lysine isopeptide (Lys-Gly) (interchain with G-Cter in SUMO2)).

As to quaternary structure, interacts (via N-terminus) with SLF2; this interaction links RAD18 to the SMC5-SMC6 complex. Interacts (via BRCT domains) with RAD18; this interaction occurs in a SLF2-independent manner. Interacts with SMC6. Interacts (via BRCT domains) with RAD18 (via C-terminus and phosphorylated form); this interaction is required for efficient repair of UV-induced DNA damage.

It localises to the nucleus. The protein localises to the cytoplasm. The protein resides in the cytoskeleton. Its subcellular location is the microtubule organizing center. It is found in the centrosome. Functionally, plays a role in the DNA damage response (DDR) pathway by regulating postreplication repair of UV-damaged DNA and genomic stability maintenance. The SLF1-SLF2 complex acts to link RAD18 with the SMC5-SMC6 complex at replication-coupled interstrand cross-links (ICL) and DNA double-strand breaks (DSBs) sites on chromatin during DNA repair in response to stalled replication forks. Promotes the recruitment of SLF2 and the SMC5-SMC6 complex to DNA lesions. The polypeptide is SMC5-SMC6 complex localization factor protein 1 (Bos taurus (Bovine)).